Reading from the N-terminus, the 143-residue chain is Peptide methionine sulfoxide reductase B8 (143 aa).

A MsrB domain is found at 18 to 139 (DEEWRAVLSP…NSVSLKFASA (122 aa)). Cys57, Cys60, Cys103, and Cys106 together coordinate Zn(2+). Cys75 and Cys128 form a disulfide bridge. Cys128 acts as the Nucleophile in catalysis.

It belongs to the MsrB Met sulfoxide reductase family. Requires Zn(2+) as cofactor.

It localises to the cytoplasm. The protein resides in the cytosol. The catalysed reaction is L-methionyl-[protein] + [thioredoxin]-disulfide + H2O = L-methionyl-(R)-S-oxide-[protein] + [thioredoxin]-dithiol. Its function is as follows. Catalyzes the reduction of methionine sulfoxide (MetSO) to methionine in proteins. Plays a protective role against oxidative stress by restoring activity to proteins that have been inactivated by methionine oxidation. MSRB family specifically reduces the MetSO R-enantiomer. This is Peptide methionine sulfoxide reductase B8 (MSRB8) from Arabidopsis thaliana (Mouse-ear cress).